Here is an 81-residue protein sequence, read N- to C-terminus: Cytotoxin 1d/1e (81 aa).

An N-terminal signal peptide occupies residues 1–21 (MKTLLLTLVVVTIVCLDLGYT). 4 cysteine pairs are disulfide-bonded: Cys24-Cys42, Cys35-Cys59, Cys63-Cys74, and Cys75-Cys80.

This sequence belongs to the three-finger toxin family. Short-chain subfamily. Type IA cytotoxin sub-subfamily. In terms of assembly, monomer in solution; Homodimer and oligomer in the presence of negatively charged lipids forming a pore with a size ranging between 20 and 30 Angstroms. As to expression, expressed by the venom gland.

The protein resides in the secreted. It localises to the target cell membrane. Shows cytolytic activity on many different cells by forming pore in lipid membranes. In vivo, increases heart rate or kills the animal by cardiac arrest. In addition, it binds to heparin with high affinity, interacts with Kv channel-interacting protein 1 (KCNIP1) in a calcium-independent manner, and binds to integrin alpha-V/beta-3 (ITGAV/ITGB3) with moderate affinity. The polypeptide is Cytotoxin 1d/1e (Naja atra (Chinese cobra)).